Reading from the N-terminus, the 411-residue chain is Argininosuccinate lyase (411 aa).

Belongs to the lyase 1 family. Argininosuccinate lyase subfamily.

The protein localises to the cytoplasm. It catalyses the reaction 2-(N(omega)-L-arginino)succinate = fumarate + L-arginine. Its pathway is amino-acid biosynthesis; L-arginine biosynthesis; L-arginine from L-ornithine and carbamoyl phosphate: step 3/3. This Legionella pneumophila (strain Paris) protein is Argininosuccinate lyase.